The following is a 94-amino-acid chain: Small ribosomal subunit protein uS19 (94 aa).

Residues 73-94 (EFSPTRRFGGHADKKSKKGQVK) form a disordered region.

It belongs to the universal ribosomal protein uS19 family.

Its function is as follows. Protein S19 forms a complex with S13 that binds strongly to the 16S ribosomal RNA. This Kosmotoga olearia (strain ATCC BAA-1733 / DSM 21960 / TBF 19.5.1) protein is Small ribosomal subunit protein uS19.